We begin with the raw amino-acid sequence, 140 residues long: Protein YwqH (140 aa).

Residues 6–51 (MLADIKSSLNGKISDVEDKIEKLKKAKKDIDTLQEEAITEIKEIVK) are a coiled coil.

The chain is Protein YwqH (ywqH) from Bacillus subtilis (strain 168).